A 162-amino-acid chain; its full sequence is Nucleotide-binding protein Francci3_0558 (162 aa).

It belongs to the YajQ family.

In terms of biological role, nucleotide-binding protein. In Frankia casuarinae (strain DSM 45818 / CECT 9043 / HFP020203 / CcI3), this protein is Nucleotide-binding protein Francci3_0558.